Consider the following 149-residue polypeptide: D-aminoacyl-tRNA deacylase (149 aa).

Positions 137 to 138 (GP) match the Gly-cisPro motif, important for rejection of L-amino acids motif.

This sequence belongs to the DTD family. Homodimer.

It is found in the cytoplasm. The catalysed reaction is glycyl-tRNA(Ala) + H2O = tRNA(Ala) + glycine + H(+). The enzyme catalyses a D-aminoacyl-tRNA + H2O = a tRNA + a D-alpha-amino acid + H(+). In terms of biological role, an aminoacyl-tRNA editing enzyme that deacylates mischarged D-aminoacyl-tRNAs. Also deacylates mischarged glycyl-tRNA(Ala), protecting cells against glycine mischarging by AlaRS. Acts via tRNA-based rather than protein-based catalysis; rejects L-amino acids rather than detecting D-amino acids in the active site. By recycling D-aminoacyl-tRNA to D-amino acids and free tRNA molecules, this enzyme counteracts the toxicity associated with the formation of D-aminoacyl-tRNA entities in vivo and helps enforce protein L-homochirality. The sequence is that of D-aminoacyl-tRNA deacylase from Clostridium acetobutylicum (strain ATCC 824 / DSM 792 / JCM 1419 / IAM 19013 / LMG 5710 / NBRC 13948 / NRRL B-527 / VKM B-1787 / 2291 / W).